The chain runs to 382 residues: Carbamoyl phosphate synthase small chain (382 aa).

A CPSase region spans residues 1–187; the sequence is MPTPALLVLA…EFRPQTATEE (187 aa). 3 residues coordinate L-glutamine: S47, G239, and G241. One can recognise a Glutamine amidotransferase type-1 domain in the interval 191–377; sequence TVVAIDFGVK…VAQMRAYRQQ (187 aa). Residue C267 is the Nucleophile of the active site. Residues L268, Q271, N307, G309, and F310 each contribute to the L-glutamine site. Catalysis depends on residues H350 and E352.

Belongs to the CarA family. In terms of assembly, composed of two chains; the small (or glutamine) chain promotes the hydrolysis of glutamine to ammonia, which is used by the large (or ammonia) chain to synthesize carbamoyl phosphate. Tetramer of heterodimers (alpha,beta)4.

It catalyses the reaction hydrogencarbonate + L-glutamine + 2 ATP + H2O = carbamoyl phosphate + L-glutamate + 2 ADP + phosphate + 2 H(+). The catalysed reaction is L-glutamine + H2O = L-glutamate + NH4(+). Its pathway is amino-acid biosynthesis; L-arginine biosynthesis; carbamoyl phosphate from bicarbonate: step 1/1. It participates in pyrimidine metabolism; UMP biosynthesis via de novo pathway; (S)-dihydroorotate from bicarbonate: step 1/3. Functionally, small subunit of the glutamine-dependent carbamoyl phosphate synthetase (CPSase). CPSase catalyzes the formation of carbamoyl phosphate from the ammonia moiety of glutamine, carbonate, and phosphate donated by ATP, constituting the first step of 2 biosynthetic pathways, one leading to arginine and/or urea and the other to pyrimidine nucleotides. The small subunit (glutamine amidotransferase) binds and cleaves glutamine to supply the large subunit with the substrate ammonia. This chain is Carbamoyl phosphate synthase small chain, found in Thermosynechococcus vestitus (strain NIES-2133 / IAM M-273 / BP-1).